Reading from the N-terminus, the 193-residue chain is ATP-dependent Clp protease proteolytic subunit 1 (193 aa).

The Nucleophile role is filled by Ser-99. The active site involves His-124.

It belongs to the peptidase S14 family. Fourteen ClpP subunits assemble into 2 heptameric rings which stack back to back to give a disk-like structure with a central cavity, resembling the structure of eukaryotic proteasomes.

The protein localises to the cytoplasm. The enzyme catalyses Hydrolysis of proteins to small peptides in the presence of ATP and magnesium. alpha-casein is the usual test substrate. In the absence of ATP, only oligopeptides shorter than five residues are hydrolyzed (such as succinyl-Leu-Tyr-|-NHMec, and Leu-Tyr-Leu-|-Tyr-Trp, in which cleavage of the -Tyr-|-Leu- and -Tyr-|-Trp bonds also occurs).. Its function is as follows. Cleaves peptides in various proteins in a process that requires ATP hydrolysis. Has a chymotrypsin-like activity. Plays a major role in the degradation of misfolded proteins. The protein is ATP-dependent Clp protease proteolytic subunit 1 of Shouchella clausii (strain KSM-K16) (Alkalihalobacillus clausii).